Consider the following 511-residue polypeptide: ATP synthase subunit alpha, plastid (511 aa).

170–177 lines the ATP pocket; the sequence is GDRQTGKT.

This sequence belongs to the ATPase alpha/beta chains family. In terms of assembly, F-type ATPases have 2 components, CF(1) - the catalytic core - and CF(0) - the membrane proton channel. CF(1) has five subunits: alpha(3), beta(3), gamma(1), delta(1), epsilon(1). CF(0) has four main subunits: a, b, b' and c.

The protein resides in the plastid membrane. It carries out the reaction ATP + H2O + 4 H(+)(in) = ADP + phosphate + 5 H(+)(out). Functionally, produces ATP from ADP in the presence of a proton gradient across the membrane. The alpha chain is a regulatory subunit. This Cuscuta reflexa (Southern Asian dodder) protein is ATP synthase subunit alpha, plastid.